Consider the following 175-residue polypeptide: SsrA-binding protein (175 aa).

Disordered regions lie at residues 1–29 (MTRN…ERDA) and 152–175 (KRET…SRKS).

It belongs to the SmpB family.

Its subcellular location is the cytoplasm. In terms of biological role, required for rescue of stalled ribosomes mediated by trans-translation. Binds to transfer-messenger RNA (tmRNA), required for stable association of tmRNA with ribosomes. tmRNA and SmpB together mimic tRNA shape, replacing the anticodon stem-loop with SmpB. tmRNA is encoded by the ssrA gene; the 2 termini fold to resemble tRNA(Ala) and it encodes a 'tag peptide', a short internal open reading frame. During trans-translation Ala-aminoacylated tmRNA acts like a tRNA, entering the A-site of stalled ribosomes, displacing the stalled mRNA. The ribosome then switches to translate the ORF on the tmRNA; the nascent peptide is terminated with the 'tag peptide' encoded by the tmRNA and targeted for degradation. The ribosome is freed to recommence translation, which seems to be the essential function of trans-translation. The protein is SsrA-binding protein of Koribacter versatilis (strain Ellin345).